A 333-amino-acid chain; its full sequence is Ribosomal RNA small subunit methyltransferase H (333 aa).

S-adenosyl-L-methionine contacts are provided by residues 36–38 (GGY), Asp54, Phe81, Asp102, and Gln109.

This sequence belongs to the methyltransferase superfamily. RsmH family.

It localises to the cytoplasm. It carries out the reaction cytidine(1402) in 16S rRNA + S-adenosyl-L-methionine = N(4)-methylcytidine(1402) in 16S rRNA + S-adenosyl-L-homocysteine + H(+). Its function is as follows. Specifically methylates the N4 position of cytidine in position 1402 (C1402) of 16S rRNA. In Afipia carboxidovorans (strain ATCC 49405 / DSM 1227 / KCTC 32145 / OM5) (Oligotropha carboxidovorans), this protein is Ribosomal RNA small subunit methyltransferase H.